We begin with the raw amino-acid sequence, 266 residues long: Hydroxyethylthiazole kinase (266 aa).

Methionine 41 serves as a coordination point for substrate. The ATP site is built by arginine 117 and serine 163. Residue alanine 190 participates in substrate binding.

This sequence belongs to the Thz kinase family. The cofactor is Mg(2+).

The catalysed reaction is 5-(2-hydroxyethyl)-4-methylthiazole + ATP = 4-methyl-5-(2-phosphooxyethyl)-thiazole + ADP + H(+). It functions in the pathway cofactor biosynthesis; thiamine diphosphate biosynthesis; 4-methyl-5-(2-phosphoethyl)-thiazole from 5-(2-hydroxyethyl)-4-methylthiazole: step 1/1. Functionally, catalyzes the phosphorylation of the hydroxyl group of 4-methyl-5-beta-hydroxyethylthiazole (THZ). The polypeptide is Hydroxyethylthiazole kinase (Histophilus somni (strain 129Pt) (Haemophilus somnus)).